The sequence spans 331 residues: MSTKEKLISHVMKEEPVGSRNKVTVVGVGMVGMASAISILIKDLGDELAMVDVMEDKLKGEVMDLQHGSLFLKTKIVGDKDYSVTANSKVVVVTAGARQQEGESRLNLVQRNVNIFKFIIPNIVKYSPNCILMVVSNPVDILTYVAWKLSGFPRHRVLGSGTNLDSARFRHLIGEKLHLHPSSCHAWIVGEHGDSSVPVWSGVNVAGVSLQNLNPQMGTEGDGENWKAIHKEVVDGAYEVIKLKGYTSWAIGMSVADLVESIIKNMHKVHPVSTLVQGMHGVKDEVFLSVPCVLGNSGLTDVIHMTLKAEEEKQVQKSAETLWGVQKELTL.

NAD(+)-binding positions include 29–57 (GMVGMASAISILIKDLGDELAMVDVMEDK) and Arg98. Arg105, Asn137, and Arg168 together coordinate substrate. Asn137 lines the NAD(+) pocket. His192 functions as the Proton acceptor in the catalytic mechanism. Position 247 (Thr247) interacts with substrate.

It belongs to the LDH/MDH superfamily. LDH family. Homotetramer.

It is found in the cytoplasm. The enzyme catalyses (S)-lactate + NAD(+) = pyruvate + NADH + H(+). Its pathway is fermentation; pyruvate fermentation to lactate; (S)-lactate from pyruvate: step 1/1. Interconverts simultaneously and stereospecifically pyruvate and lactate with concomitant interconversion of NADH and NAD(+). This chain is L-lactate dehydrogenase A chain (ldha), found in Harpagifer antarcticus (Antarctic spiny plunderfish).